The chain runs to 601 residues: tRNA 5-methylaminomethyl-2-thiouridine biosynthesis bifunctional protein MnmC (601 aa).

The interval Met-1–Pro-237 is tRNA (mnm(5)s(2)U34)-methyltransferase. The FAD-dependent cmnm(5)s(2)U34 oxidoreductase stretch occupies residues Ile-252–Val-601.

It in the N-terminal section; belongs to the methyltransferase superfamily. tRNA (mnm(5)s(2)U34)-methyltransferase family. In the C-terminal section; belongs to the DAO family. It depends on FAD as a cofactor.

It localises to the cytoplasm. It catalyses the reaction 5-aminomethyl-2-thiouridine(34) in tRNA + S-adenosyl-L-methionine = 5-methylaminomethyl-2-thiouridine(34) in tRNA + S-adenosyl-L-homocysteine + H(+). Its function is as follows. Catalyzes the last two steps in the biosynthesis of 5-methylaminomethyl-2-thiouridine (mnm(5)s(2)U) at the wobble position (U34) in tRNA. Catalyzes the FAD-dependent demodification of cmnm(5)s(2)U34 to nm(5)s(2)U34, followed by the transfer of a methyl group from S-adenosyl-L-methionine to nm(5)s(2)U34, to form mnm(5)s(2)U34. The sequence is that of tRNA 5-methylaminomethyl-2-thiouridine biosynthesis bifunctional protein MnmC from Caulobacter sp. (strain K31).